The primary structure comprises 223 residues: UPF0758 protein FMG_0357 (223 aa).

Residues 101-223 (SLNDPDSVAE…SLSMRKGMYF (123 aa)) form the MPN domain. Residues His-172, His-174, and Asp-185 each contribute to the Zn(2+) site. A JAMM motif motif is present at residues 172 to 185 (HNHPSGSLIPSNAD).

Belongs to the UPF0758 family.

The chain is UPF0758 protein FMG_0357 from Finegoldia magna (strain ATCC 29328 / DSM 20472 / WAL 2508) (Peptostreptococcus magnus).